The primary structure comprises 461 residues: Probable Xaa-Pro aminopeptidase PEPP (461 aa).

Mn(2+) is bound by residues Asp-257, Asp-268, Glu-391, and Glu-431.

The protein belongs to the peptidase M24B family. It depends on Mn(2+) as a cofactor.

The enzyme catalyses Release of any N-terminal amino acid, including proline, that is linked to proline, even from a dipeptide or tripeptide.. In terms of biological role, catalyzes the removal of a penultimate prolyl residue from the N-termini of peptides. The chain is Probable Xaa-Pro aminopeptidase PEPP (PEPP) from Colletotrichum graminicola (strain M1.001 / M2 / FGSC 10212) (Maize anthracnose fungus).